We begin with the raw amino-acid sequence, 310 residues long: MNNQQSRGALGTSGATPDLPDATPGLSRNPVGGHVPVAGGLHSVGLAYARDLAAEAVQVFVANPRGWATPAGNPRQDEEFRAACAAESIPAYVHAPYLINFGSHTEATVEKSVESLRHSLRRGREIGALGVVVHTGSATGGRERSVALAQVREHLLPLLDELTHDDDPYLLLESTAGQGASLCSRTWDFGPYFEALDAHPKLGVCLDTCHIFAAGHDLTGPSGMHQTLDLLVDTVGEGRLKLIHANDSKDVVGAHKDRHENIGSGHIGEDPFRALMTHPATEGVPLIIETPGGKEGHAADVEQLKKLRDG.

The disordered stretch occupies residues 1–31 (MNNQQSRGALGTSGATPDLPDATPGLSRNPV). Zn(2+) contacts are provided by His94, His134, Glu173, Asp207, His210, His244, Asp257, His259, and Glu289.

Belongs to the AP endonuclease 2 family. The cofactor is Zn(2+).

The enzyme catalyses Endonucleolytic cleavage to 5'-phosphooligonucleotide end-products.. Its function is as follows. Endonuclease IV plays a role in DNA repair. It cleaves phosphodiester bonds at apurinic or apyrimidinic (AP) sites, generating a 3'-hydroxyl group and a 5'-terminal sugar phosphate. The protein is Probable endonuclease 4 of Streptomyces avermitilis (strain ATCC 31267 / DSM 46492 / JCM 5070 / NBRC 14893 / NCIMB 12804 / NRRL 8165 / MA-4680).